Consider the following 466-residue polypeptide: Acetylornithine aminotransferase, mitochondrial (466 aa).

Residue K308 is modified to N6-(pyridoxal phosphate)lysine.

This sequence belongs to the class-III pyridoxal-phosphate-dependent aminotransferase family. Requires pyridoxal 5'-phosphate as cofactor.

It is found in the mitochondrion matrix. It carries out the reaction N(2)-acetyl-L-ornithine + 2-oxoglutarate = N-acetyl-L-glutamate 5-semialdehyde + L-glutamate. Its pathway is amino-acid biosynthesis; L-arginine biosynthesis; N(2)-acetyl-L-ornithine from L-glutamate: step 4/4. The polypeptide is Acetylornithine aminotransferase, mitochondrial (ARG8) (Debaryomyces hansenii (strain ATCC 36239 / CBS 767 / BCRC 21394 / JCM 1990 / NBRC 0083 / IGC 2968) (Yeast)).